The following is a 132-amino-acid chain: Small ribosomal subunit protein uS8 (132 aa).

This sequence belongs to the universal ribosomal protein uS8 family. In terms of assembly, part of the 30S ribosomal subunit. Contacts proteins S5 and S12.

Functionally, one of the primary rRNA binding proteins, it binds directly to 16S rRNA central domain where it helps coordinate assembly of the platform of the 30S subunit. The protein is Small ribosomal subunit protein uS8 of Leifsonia xyli subsp. xyli (strain CTCB07).